The primary structure comprises 271 residues: Undecaprenyl-diphosphatase (271 aa).

8 consecutive transmembrane segments (helical) span residues Tyr-5–Val-25, Ala-45–Trp-65, Thr-86–Ile-106, Leu-114–Ala-134, Ile-149–Phe-169, Ala-189–Leu-209, Val-226–Ile-246, and Phe-251–Ala-271.

Belongs to the UppP family.

It localises to the cell inner membrane. It carries out the reaction di-trans,octa-cis-undecaprenyl diphosphate + H2O = di-trans,octa-cis-undecaprenyl phosphate + phosphate + H(+). Its function is as follows. Catalyzes the dephosphorylation of undecaprenyl diphosphate (UPP). Confers resistance to bacitracin. The chain is Undecaprenyl-diphosphatase from Aeromonas hydrophila subsp. hydrophila (strain ATCC 7966 / DSM 30187 / BCRC 13018 / CCUG 14551 / JCM 1027 / KCTC 2358 / NCIMB 9240 / NCTC 8049).